A 245-amino-acid chain; its full sequence is 1-(5-phosphoribosyl)-5-[(5-phosphoribosylamino)methylideneamino] imidazole-4-carboxamide isomerase (245 aa).

The active-site Proton acceptor is D8. The Proton donor role is filled by D130.

This sequence belongs to the HisA/HisF family.

The protein resides in the cytoplasm. The catalysed reaction is 1-(5-phospho-beta-D-ribosyl)-5-[(5-phospho-beta-D-ribosylamino)methylideneamino]imidazole-4-carboxamide = 5-[(5-phospho-1-deoxy-D-ribulos-1-ylimino)methylamino]-1-(5-phospho-beta-D-ribosyl)imidazole-4-carboxamide. It participates in amino-acid biosynthesis; L-histidine biosynthesis; L-histidine from 5-phospho-alpha-D-ribose 1-diphosphate: step 4/9. In Pseudomonas putida (strain ATCC 47054 / DSM 6125 / CFBP 8728 / NCIMB 11950 / KT2440), this protein is 1-(5-phosphoribosyl)-5-[(5-phosphoribosylamino)methylideneamino] imidazole-4-carboxamide isomerase.